A 986-amino-acid polypeptide reads, in one-letter code: Bifunctional glutamine synthetase adenylyltransferase/adenylyl-removing enzyme (986 aa).

The tract at residues 1–470 (MAAVAKRTVT…ERHYAALFET (470 aa)) is adenylyl removase. The adenylyl transferase stretch occupies residues 476 to 986 (AGIGNLVFTG…FDLLLRAGRP (511 aa)).

The protein belongs to the GlnE family. Requires Mg(2+) as cofactor.

It catalyses the reaction [glutamine synthetase]-O(4)-(5'-adenylyl)-L-tyrosine + phosphate = [glutamine synthetase]-L-tyrosine + ADP. The enzyme catalyses [glutamine synthetase]-L-tyrosine + ATP = [glutamine synthetase]-O(4)-(5'-adenylyl)-L-tyrosine + diphosphate. In terms of biological role, involved in the regulation of glutamine synthetase GlnA, a key enzyme in the process to assimilate ammonia. When cellular nitrogen levels are high, the C-terminal adenylyl transferase (AT) inactivates GlnA by covalent transfer of an adenylyl group from ATP to specific tyrosine residue of GlnA, thus reducing its activity. Conversely, when nitrogen levels are low, the N-terminal adenylyl removase (AR) activates GlnA by removing the adenylyl group by phosphorolysis, increasing its activity. The regulatory region of GlnE binds the signal transduction protein PII (GlnB) which indicates the nitrogen status of the cell. The protein is Bifunctional glutamine synthetase adenylyltransferase/adenylyl-removing enzyme of Mesorhizobium japonicum (strain LMG 29417 / CECT 9101 / MAFF 303099) (Mesorhizobium loti (strain MAFF 303099)).